Consider the following 350-residue polypeptide: Holliday junction branch migration complex subunit RuvB (350 aa).

A large ATPase domain (RuvB-L) region spans residues 4 to 184 (TDRLIAAQPQ…FGIVQRLEFY (181 aa)). Residues Ile-23, Arg-24, Gly-65, Lys-68, Thr-69, Thr-70, 131–133 (EDY), Arg-174, Tyr-184, and Arg-221 contribute to the ATP site. Thr-69 contacts Mg(2+). The interval 185 to 255 (AVEELTEIVV…IADQALNMLH (71 aa)) is small ATPAse domain (RuvB-S). The tract at residues 258 to 350 (RHGLDHMDRR…PLTPPGESDA (93 aa)) is head domain (RuvB-H). DNA contacts are provided by Arg-294, Arg-313, and Arg-318.

The protein belongs to the RuvB family. In terms of assembly, homohexamer. Forms an RuvA(8)-RuvB(12)-Holliday junction (HJ) complex. HJ DNA is sandwiched between 2 RuvA tetramers; dsDNA enters through RuvA and exits via RuvB. An RuvB hexamer assembles on each DNA strand where it exits the tetramer. Each RuvB hexamer is contacted by two RuvA subunits (via domain III) on 2 adjacent RuvB subunits; this complex drives branch migration. In the full resolvosome a probable DNA-RuvA(4)-RuvB(12)-RuvC(2) complex forms which resolves the HJ.

The protein resides in the cytoplasm. It carries out the reaction ATP + H2O = ADP + phosphate + H(+). Its function is as follows. The RuvA-RuvB-RuvC complex processes Holliday junction (HJ) DNA during genetic recombination and DNA repair, while the RuvA-RuvB complex plays an important role in the rescue of blocked DNA replication forks via replication fork reversal (RFR). RuvA specifically binds to HJ cruciform DNA, conferring on it an open structure. The RuvB hexamer acts as an ATP-dependent pump, pulling dsDNA into and through the RuvAB complex. RuvB forms 2 homohexamers on either side of HJ DNA bound by 1 or 2 RuvA tetramers; 4 subunits per hexamer contact DNA at a time. Coordinated motions by a converter formed by DNA-disengaged RuvB subunits stimulates ATP hydrolysis and nucleotide exchange. Immobilization of the converter enables RuvB to convert the ATP-contained energy into a lever motion, pulling 2 nucleotides of DNA out of the RuvA tetramer per ATP hydrolyzed, thus driving DNA branch migration. The RuvB motors rotate together with the DNA substrate, which together with the progressing nucleotide cycle form the mechanistic basis for DNA recombination by continuous HJ branch migration. Branch migration allows RuvC to scan DNA until it finds its consensus sequence, where it cleaves and resolves cruciform DNA. This is Holliday junction branch migration complex subunit RuvB from Chromohalobacter salexigens (strain ATCC BAA-138 / DSM 3043 / CIP 106854 / NCIMB 13768 / 1H11).